A 339-amino-acid polypeptide reads, in one-letter code: NADH-quinone oxidoreductase subunit H (339 aa).

A run of 9 helical transmembrane segments spans residues 9-29 (IFPL…LILC), 50-70 (PNVV…KLLF), 82-102 (ILFI…WAVI), 115-135 (VGVL…IIAG), 161-181 (MGLV…SEII), 187-207 (IPWW…ISVL), 235-255 (MGFA…SAMT), 275-295 (IPGF…FLWI), and 311-331 (GWKV…SVLV).

This sequence belongs to the complex I subunit 1 family. NDH-1 is composed of 14 different subunits. Subunits NuoA, H, J, K, L, M, N constitute the membrane sector of the complex.

The protein resides in the cell inner membrane. It catalyses the reaction a quinone + NADH + 5 H(+)(in) = a quinol + NAD(+) + 4 H(+)(out). NDH-1 shuttles electrons from NADH, via FMN and iron-sulfur (Fe-S) centers, to quinones in the respiratory chain. The immediate electron acceptor for the enzyme in this species is believed to be ubiquinone. Couples the redox reaction to proton translocation (for every two electrons transferred, four hydrogen ions are translocated across the cytoplasmic membrane), and thus conserves the redox energy in a proton gradient. This subunit may bind ubiquinone. In Rickettsia rickettsii (strain Iowa), this protein is NADH-quinone oxidoreductase subunit H.